A 916-amino-acid polypeptide reads, in one-letter code: Protein translocase subunit SecA (916 aa).

ATP is bound by residues Q86, 104 to 108 (GEGKT), and D494. The segment at 859–916 (LEAPEKPAQLQYTAPSEGGGTQTRVETRSTGRSGNPAKAAEQDAAKDAAKRPAKKKRR) is disordered. Residues 880-891 (QTRVETRSTGRS) are compositionally biased toward polar residues. The span at 898–908 (AEQDAAKDAAK) shows a compositional bias: basic and acidic residues.

Belongs to the SecA family. As to quaternary structure, monomer and homodimer. Part of the essential Sec protein translocation apparatus which comprises SecA, SecYEG and auxiliary proteins SecDF. Other proteins may also be involved.

The protein localises to the cell membrane. It localises to the cytoplasm. It catalyses the reaction ATP + H2O + cellular proteinSide 1 = ADP + phosphate + cellular proteinSide 2.. Its function is as follows. Part of the Sec protein translocase complex. Interacts with the SecYEG preprotein conducting channel. Has a central role in coupling the hydrolysis of ATP to the transfer of proteins into and across the cell membrane, serving as an ATP-driven molecular motor driving the stepwise translocation of polypeptide chains across the membrane. In Pseudarthrobacter chlorophenolicus (strain ATCC 700700 / DSM 12829 / CIP 107037 / JCM 12360 / KCTC 9906 / NCIMB 13794 / A6) (Arthrobacter chlorophenolicus), this protein is Protein translocase subunit SecA.